A 147-amino-acid chain; its full sequence is Hemoglobin subunit beta-1 (147 aa).

At valine 2 the chain carries N-acetylvaline. The Globin domain occupies 3–147 (HLTGEEKAAV…VATALAHKYH (145 aa)). Position 18 is an N6-succinyllysine (lysine 18). Serine 45 bears the Phosphoserine mark. The residue at position 60 (lysine 60) is an N6-succinyllysine. Residues histidine 64 and histidine 93 each coordinate heme b. Residue arginine 105 is modified to Asymmetric dimethylarginine. Threonine 124 is modified (phosphothreonine).

Belongs to the globin family. In terms of assembly, hb1 is a heterotetramer of two alpha chains and two beta-1 chains. Red blood cells.

Involved in oxygen transport from the lung to the various peripheral tissues. This chain is Hemoglobin subunit beta-1 (HBB1), found in Chalinolobus morio (Chocolate-wattled bat).